The sequence spans 280 residues: Aspartate/glutamate leucyltransferase (280 aa).

Belongs to the R-transferase family. Bpt subfamily.

It is found in the cytoplasm. It catalyses the reaction N-terminal L-glutamyl-[protein] + L-leucyl-tRNA(Leu) = N-terminal L-leucyl-L-glutamyl-[protein] + tRNA(Leu) + H(+). It carries out the reaction N-terminal L-aspartyl-[protein] + L-leucyl-tRNA(Leu) = N-terminal L-leucyl-L-aspartyl-[protein] + tRNA(Leu) + H(+). Functionally, functions in the N-end rule pathway of protein degradation where it conjugates Leu from its aminoacyl-tRNA to the N-termini of proteins containing an N-terminal aspartate or glutamate. The protein is Aspartate/glutamate leucyltransferase of Cereibacter sphaeroides (strain KD131 / KCTC 12085) (Rhodobacter sphaeroides).